The following is a 366-amino-acid chain: Ribosomal RNA large subunit methyltransferase M (366 aa).

Residues Ser188, 221 to 224 (CPGG), Asp240, Asp260, and Asp277 contribute to the S-adenosyl-L-methionine site. Lys306 serves as the catalytic Proton acceptor.

This sequence belongs to the class I-like SAM-binding methyltransferase superfamily. RNA methyltransferase RlmE family. RlmM subfamily. Monomer.

The protein resides in the cytoplasm. The catalysed reaction is cytidine(2498) in 23S rRNA + S-adenosyl-L-methionine = 2'-O-methylcytidine(2498) in 23S rRNA + S-adenosyl-L-homocysteine + H(+). In terms of biological role, catalyzes the 2'-O-methylation at nucleotide C2498 in 23S rRNA. This Pectobacterium carotovorum subsp. carotovorum (strain PC1) protein is Ribosomal RNA large subunit methyltransferase M.